A 264-amino-acid polypeptide reads, in one-letter code: 3-methyl-2-oxobutanoate hydroxymethyltransferase (264 aa).

Mg(2+) contacts are provided by Asp-45 and Asp-84. Residues 45-46 (DS), Asp-84, and Lys-113 contribute to the 3-methyl-2-oxobutanoate site. Mg(2+) is bound at residue Glu-115. Glu-182 (proton acceptor) is an active-site residue.

This sequence belongs to the PanB family. In terms of assembly, homodecamer; pentamer of dimers. Requires Mg(2+) as cofactor.

The protein localises to the cytoplasm. It catalyses the reaction 3-methyl-2-oxobutanoate + (6R)-5,10-methylene-5,6,7,8-tetrahydrofolate + H2O = 2-dehydropantoate + (6S)-5,6,7,8-tetrahydrofolate. It functions in the pathway cofactor biosynthesis; (R)-pantothenate biosynthesis; (R)-pantoate from 3-methyl-2-oxobutanoate: step 1/2. Catalyzes the reversible reaction in which hydroxymethyl group from 5,10-methylenetetrahydrofolate is transferred onto alpha-ketoisovalerate to form ketopantoate. The polypeptide is 3-methyl-2-oxobutanoate hydroxymethyltransferase (Caldicellulosiruptor bescii (strain ATCC BAA-1888 / DSM 6725 / KCTC 15123 / Z-1320) (Anaerocellum thermophilum)).